A 195-amino-acid polypeptide reads, in one-letter code: Phenoloxidase subunit 1 (195 aa).

Histidine 10 contacts Cu cation. N-linked (GlcNAc...) asparagine glycosylation is found at asparagine 77, asparagine 97, and asparagine 98.

The protein belongs to the tyrosinase family. In terms of assembly, heterodimer. The cofactor is Cu(2+).

It is found in the secreted. It catalyses the reaction 2 L-dopa + O2 = 2 L-dopaquinone + 2 H2O. The enzyme catalyses L-tyrosine + O2 = L-dopaquinone + H2O. In terms of biological role, this is a copper-containing oxidase that functions in the formation of pigments such as melanins and other polyphenolic compounds. Catalyzes the rate-limiting conversions of tyrosine to DOPA, DOPA to DOPA-quinone and possibly 5,6 dihydroxyindole to indole-5'6 quinone. This chain is Phenoloxidase subunit 1, found in Simulium damnosum (Black fly).